Consider the following 190-residue polypeptide: UPF0301 protein Psyr_0485 (190 aa).

Belongs to the UPF0301 (AlgH) family.

The sequence is that of UPF0301 protein Psyr_0485 from Pseudomonas syringae pv. syringae (strain B728a).